The sequence spans 128 residues: Glycine cleavage system H protein (128 aa).

The Lipoyl-binding domain occupies 24–106 (LVRIGISEFA…HGEGWLLIIR (83 aa)). Lys65 is modified (N6-lipoyllysine).

It belongs to the GcvH family. In terms of assembly, the glycine cleavage system is composed of four proteins: P, T, L and H. The cofactor is (R)-lipoate.

In terms of biological role, the glycine cleavage system catalyzes the degradation of glycine. The H protein shuttles the methylamine group of glycine from the P protein to the T protein. The protein is Glycine cleavage system H protein of Prochlorococcus marinus (strain NATL2A).